We begin with the raw amino-acid sequence, 164 residues long: uncharacterized protein (164 aa).

Residues G46–L142 form a disordered region.

This is an uncharacterized protein from Caenorhabditis elegans.